A 942-amino-acid polypeptide reads, in one-letter code: Isoleucine--tRNA ligase (942 aa).

A 'HIGH' region motif is present at residues 58 to 68; sequence PYANGDIHLGH. Position 567 (E567) interacts with L-isoleucyl-5'-AMP. The short motif at 608 to 612 is the 'KMSKS' region element; the sequence is KMSKS. ATP is bound at residue K611. C905, C908, C925, and C928 together coordinate Zn(2+).

Belongs to the class-I aminoacyl-tRNA synthetase family. IleS type 1 subfamily. Monomer. Zn(2+) is required as a cofactor.

The protein resides in the cytoplasm. The catalysed reaction is tRNA(Ile) + L-isoleucine + ATP = L-isoleucyl-tRNA(Ile) + AMP + diphosphate. Catalyzes the attachment of isoleucine to tRNA(Ile). As IleRS can inadvertently accommodate and process structurally similar amino acids such as valine, to avoid such errors it has two additional distinct tRNA(Ile)-dependent editing activities. One activity is designated as 'pretransfer' editing and involves the hydrolysis of activated Val-AMP. The other activity is designated 'posttransfer' editing and involves deacylation of mischarged Val-tRNA(Ile). The polypeptide is Isoleucine--tRNA ligase (Pseudoalteromonas translucida (strain TAC 125)).